We begin with the raw amino-acid sequence, 78 residues long: Small ribosomal subunit protein bS18 (78 aa).

This sequence belongs to the bacterial ribosomal protein bS18 family. As to quaternary structure, part of the 30S ribosomal subunit. Forms a tight heterodimer with protein bS6.

Its function is as follows. Binds as a heterodimer with protein bS6 to the central domain of the 16S rRNA, where it helps stabilize the platform of the 30S subunit. This is Small ribosomal subunit protein bS18 from Frankia casuarinae (strain DSM 45818 / CECT 9043 / HFP020203 / CcI3).